The primary structure comprises 102 residues: Guanyl-specific ribonuclease Pc (102 aa).

Disulfide bonds link Cys-2–Cys-10 and Cys-6–Cys-101. The active site involves His-38. Glu-56 acts as the Proton acceptor in catalysis. Catalysis depends on His-90, which acts as the Proton donor.

It belongs to the ribonuclease N1/T1 family.

The catalysed reaction is [RNA] containing guanosine + H2O = an [RNA fragment]-3'-guanosine-3'-phosphate + a 5'-hydroxy-ribonucleotide-3'-[RNA fragment].. The protein is Guanyl-specific ribonuclease Pc of Penicillium chrysogenum (Penicillium notatum).